Reading from the N-terminus, the 342-residue chain is Tetraacyldisaccharide 4'-kinase (342 aa).

68–75 serves as a coordination point for ATP; it reads TVGGTGKT.

It belongs to the LpxK family.

It catalyses the reaction a lipid A disaccharide + ATP = a lipid IVA + ADP + H(+). Its pathway is glycolipid biosynthesis; lipid IV(A) biosynthesis; lipid IV(A) from (3R)-3-hydroxytetradecanoyl-[acyl-carrier-protein] and UDP-N-acetyl-alpha-D-glucosamine: step 6/6. Its function is as follows. Transfers the gamma-phosphate of ATP to the 4'-position of a tetraacyldisaccharide 1-phosphate intermediate (termed DS-1-P) to form tetraacyldisaccharide 1,4'-bis-phosphate (lipid IVA). The chain is Tetraacyldisaccharide 4'-kinase from Burkholderia ambifaria (strain ATCC BAA-244 / DSM 16087 / CCUG 44356 / LMG 19182 / AMMD) (Burkholderia cepacia (strain AMMD)).